The chain runs to 1471 residues: MALNSTDNRWSTGEDTPSEAQLPDGEERLDAAPDEKVTAEDIDRRLTNLVRKISAQSRRSHHSFLFGAGENSSLNPQSPSFDARKWARAFYNARYRQDDGHPPRVVGVAFKNLNVFGYGSPVDYQMSVGNALLKVPTMVRQALGGGKQRVDILHDVEGLVLPGEQLCVLGPPGSGCSTFLRTIAGETHGLNVDAASYINYHGISPKQMSTAFRGEAIYTAEVDAHFPMLSVGDTLYFAALARAPQVIPGGLSRQEYAKHLRDVIMAMFGIGHTINTRVGNDFVRGVSGGERKRVTIAEAALGYSPLQCWDNSTRGLDSANAVEFCRTLRTQSDVFGITSCVAIYQAPQAAYDLFDKVLVLYEGWQIYFGAAHEAQAYFEQLGFQCPESQTTADFLTSMCSPAERIVKPGFEHMAPRTPEEFAQRWKESPQRQSLLHAIEKYSTEHPLDGPDLHQFALSRRAEKSHRQREKSPYTLSYRGQVKLCLWREWQRLKNDPSVTLAMLIGNFFEALIIASIFYNLTGDTSSFYYRGALLFMMVLLNAFASVLEILTLYEKRTIVEKQSRYAYYHPSAEALSSFIMSLPYKFVNSSLVNLTLYFMSNLRREPGPFFFFLLISTSMMLAMSMFFRWFASLTKTIDQALAPSSIILLALVLYTGFTIPVSYMRGWASWIRWLNPVSYGFEAVMINEFHGREFPCSSFVPSGPGYEDVSRTQRVCSTVGATSGSDVVSGDVFVRSSYGYVNSHRWRNFGIIIAMTVFLAVCHFVTTELVASKRSKGEVLVFRRGSAHIARAKQGQRDEEQPSASAVPSEKYSEAPTPVEGVETQTSIFHWEDVCYDVKIKNETRRILDHVDGWIKPGTLTALMGVSGAGKTTLLDVLASRTTVGVVTGETLVDGRQRDSSFQRKTGYVQQQDLHLATTTVREALEFSALLRQPPQYSREEKLEYVEKVIDLLHMRDYADAIVGVPGEGLNVERRKRLTIGVELAARPKLLLFLDEPTSGLDSQTSWSICNLMETLTRNGQAILCTIHQPSAMLFQRFDRLLLLAKGGKTVYFGEIGSGARTLMDYFVRNGGPPCPKGANPAEHMLEVIGAAPGAHTDIDWPAVWRNSPEYQQVRQELSRLRQLASQPSSVHSDDPSSYSEFAAPFPAQLGQVGRRVFQQYWRTPSYLYSKAILTVGSSIFIGFSFFKGDNTAQGLQNQVFGVFVFLFVVIQLIFQIIPTFVTQRTLYESRERQSKTYSWQAFVLSNIAVEFAWNTIAAVLCFLAWFYPVGLYRNAEYTDSVHSRSTLVFLIIWATFLFASSFAHLLIAGVESAELASALANIMGIMMYAFCGILAGPHALPGFWIFMYRVNPFTYLVSGLLSASLGDAPMHCAANEFLAFSPPANRTCGEYMEDYMALAGGYLLDSAARGDEQCQYCRVDNTSQYLRNFSIDFATRWRDFGLLWVYVAVNTFGAVFLYWLCRVPKGKKRL.

A compositionally biased stretch (polar residues) spans 1 to 19; the sequence is MALNSTDNRWSTGEDTPSE. The disordered stretch occupies residues 1-40; that stretch reads MALNSTDNRWSTGEDTPSEAQLPDGEERLDAAPDEKVTAE. N-linked (GlcNAc...) asparagine glycosylation occurs at Asn-4. Positions 25–40 are enriched in basic and acidic residues; the sequence is GEERLDAAPDEKVTAE. N-linked (GlcNAc...) asparagine glycosylation is found at Asn-71 and Asn-311. Residues 133–387 enclose the ABC transporter 1 domain; that stretch reads LKVPTMVRQA…FEQLGFQCPE (255 aa). Residues 498–518 form a helical membrane-spanning segment; sequence VTLAMLIGNFFEALIIASIFY. N-linked (GlcNAc...) asparagine glycosylation is present at Asn-519. Helical transmembrane passes span 532–552, 578–598, 607–627, 641–661, and 751–771; these read ALLFMMVLLNAFASVLEILTL, FIMSLPYKFVNSSLVNLTLYF, GPFFFFLLISTSMMLAMSMFF, LAPSSIILLALVLYTGFTIPV, and IIIAMTVFLAVCHFVTTELVA. The segment at 791–819 is disordered; the sequence is RAKQGQRDEEQPSASAVPSEKYSEAPTPV. An ABC transporter 2 domain is found at 829–1071; sequence FHWEDVCYDV…TLMDYFVRNG (243 aa). N-linked (GlcNAc...) asparagine glycosylation is present at Asn-842. 865–872 is a binding site for ATP; sequence GVSGAGKT. 5 helical membrane-spanning segments follow: residues 1167-1187, 1201-1221, 1252-1272, 1288-1308, and 1326-1346; these read YLYSKAILTVGSSIFIGFSFF, FGVFVFLFVVIQLIFQIIPTF, FAWNTIAAVLCFLAWFYPVGL, LVFLIIWATFLFASSFAHLLI, and IMMYAFCGILAGPHALPGFWI. N-linked (GlcNAc...) asparagine glycans are attached at residues Asn-1386, Asn-1422, and Asn-1429. Residues 1441-1461 traverse the membrane as a helical segment; that stretch reads FGLLWVYVAVNTFGAVFLYWL.

This sequence belongs to the ABC transporter superfamily. ABCG family. PDR (TC 3.A.1.205) subfamily.

Its subcellular location is the cell membrane. The enzyme catalyses fluconazole(in) + ATP + H2O = fluconazole(out) + ADP + phosphate + H(+). It catalyses the reaction itraconazole(in) + ATP + H2O = itraconazole(out) + ADP + phosphate + H(+). Its activity is regulated as follows. The efflux inhibitor FK506 impairs the transport activity. In terms of biological role, pleiotropic ABC efflux transporter that shows a strong substrate specificity for the azole class of drugs such as lotrimazole (CLT), fluconazole (FLC), itraconazole (ITC), ketoconazole (KTC), posaconazole (POS), econazole (ECON), metconazole (MET), miconazole (MCZ), prochloraz (PCLZ), and tebuconazole (TEBZ). This Aspergillus fumigatus (strain ATCC MYA-4609 / CBS 101355 / FGSC A1100 / Af293) (Neosartorya fumigata) protein is ABC multidrug transporter F.